The chain runs to 243 residues: UPF0173 metal-dependent hydrolase Xaut_3786 (243 aa).

Belongs to the UPF0173 family.

The polypeptide is UPF0173 metal-dependent hydrolase Xaut_3786 (Xanthobacter autotrophicus (strain ATCC BAA-1158 / Py2)).